The following is a 137-amino-acid chain: MSVQKMMPIINYLGTGRRKSAVARVRLVPGNGEVIINGLPGTNYLQFNGSYLSAVRSPLETLGLEDNYDIIVKAVGGGLTGQAEAIRLGVARALCTIDTSNRHPLKKEGFLTRDSRVKERKKYGLKKARKAPQFSKR.

This sequence belongs to the universal ribosomal protein uS9 family.

The protein localises to the plastid. It localises to the chloroplast. The polypeptide is Small ribosomal subunit protein uS9c (rps9) (Mesostigma viride (Green alga)).